A 390-amino-acid chain; its full sequence is Chorismate synthase (390 aa).

Position 48 (Arg48) interacts with NADP(+). Residues 126 to 128, Gly286, 301 to 305, and Arg328 each bind FMN; these read RAS and KPTSS.

It belongs to the chorismate synthase family. The cofactor is FMNH2.

It carries out the reaction 5-O-(1-carboxyvinyl)-3-phosphoshikimate = chorismate + phosphate. It functions in the pathway metabolic intermediate biosynthesis; chorismate biosynthesis; chorismate from D-erythrose 4-phosphate and phosphoenolpyruvate: step 7/7. Catalyzes the anti-1,4-elimination of the C-3 phosphate and the C-6 proR hydrogen from 5-enolpyruvylshikimate-3-phosphate (EPSP) to yield chorismate, which is the branch point compound that serves as the starting substrate for the three terminal pathways of aromatic amino acid biosynthesis. This reaction introduces a second double bond into the aromatic ring system. In Sulfurisphaera tokodaii (strain DSM 16993 / JCM 10545 / NBRC 100140 / 7) (Sulfolobus tokodaii), this protein is Chorismate synthase.